Reading from the N-terminus, the 492-residue chain is N-succinylglutamate 5-semialdehyde dehydrogenase (492 aa).

Residue 220–225 (GSANTG) coordinates NAD(+). Catalysis depends on residues Glu-243 and Cys-277.

It belongs to the aldehyde dehydrogenase family. AstD subfamily.

It catalyses the reaction N-succinyl-L-glutamate 5-semialdehyde + NAD(+) + H2O = N-succinyl-L-glutamate + NADH + 2 H(+). The protein operates within amino-acid degradation; L-arginine degradation via AST pathway; L-glutamate and succinate from L-arginine: step 4/5. In terms of biological role, catalyzes the NAD-dependent reduction of succinylglutamate semialdehyde into succinylglutamate. The polypeptide is N-succinylglutamate 5-semialdehyde dehydrogenase (Escherichia coli O139:H28 (strain E24377A / ETEC)).